A 492-amino-acid polypeptide reads, in one-letter code: Regulatory protein ViaA (492 aa).

Belongs to the ViaA family. In terms of assembly, homodimer. Interacts with RavA.

The protein resides in the cytoplasm. Its function is as follows. Component of the RavA-ViaA chaperone complex, which may act on the membrane to optimize the function of some of the respiratory chains. ViaA stimulates the ATPase activity of RavA. In Pectobacterium atrosepticum (strain SCRI 1043 / ATCC BAA-672) (Erwinia carotovora subsp. atroseptica), this protein is Regulatory protein ViaA.